The primary structure comprises 225 residues: MKQILNDSWWQQLKDEFDKPYYQELREMLKREYAEHTVYPEPNDIYNALHYTSYENVKVVILGQDPYHGPGQAHGLSFSVQPGVNPPPSLKNIFIELQNDIGADIPNHGSLVSWAKQGVLLLNTVLTVRRGQANSHKGKGWEQLTDSIIDVLNKRDKPVVFILWGRHAQMKKERIDTSKHFIIQSPHPSPFSARNGFFGSRPFSRANQYLEQIGDEPIDWSLPNL.

Aspartate 65 serves as the catalytic Proton acceptor.

It belongs to the uracil-DNA glycosylase (UDG) superfamily. UNG family.

It is found in the cytoplasm. The catalysed reaction is Hydrolyzes single-stranded DNA or mismatched double-stranded DNA and polynucleotides, releasing free uracil.. Functionally, excises uracil residues from the DNA which can arise as a result of misincorporation of dUMP residues by DNA polymerase or due to deamination of cytosine. The polypeptide is Uracil-DNA glycosylase (Bacillus licheniformis (strain ATCC 14580 / DSM 13 / JCM 2505 / CCUG 7422 / NBRC 12200 / NCIMB 9375 / NCTC 10341 / NRRL NRS-1264 / Gibson 46)).